The chain runs to 1381 residues: Hepatocyte growth factor receptor (1381 aa).

A signal peptide spans 1–24; it reads MKAPAVLTPGILLLLFTLVQKSNG. The Extracellular portion of the chain corresponds to 25-932; sequence ECKEALTKSE…VIVQPDQNFT (908 aa). The region spanning 27 to 515 is the Sema domain; it reads KEALTKSEMN…TGKKITKIPL (489 aa). An N-linked (GlcNAc...) asparagine glycan is attached at N45. Disulfide bonds link C95–C101, C98–C160, C133–C141, and C172–C175. N106 carries an N-linked (GlcNAc...) asparagine glycan. N149 carries an N-linked (GlcNAc...) asparagine glycan. Residue N202 is glycosylated (N-linked (GlcNAc...) asparagine). Intrachain disulfides connect C298-C363 and C385-C397. N-linked (GlcNAc...) asparagine glycosylation is present at N399. 4 cysteine pairs are disulfide-bonded: C520-C538, C526-C561, C529-C545, and C541-C551. 3 consecutive IPT/TIG domains span residues 563–655, 657–739, and 742–836; these read PTIY…FSYV, PIIT…FSYR, and PIVY…LIYV. T582 carries an O-linked (Man) threonine glycan. Residues N607 and N635 are each glycosylated (N-linked (GlcNAc...) asparagine). Residues T676 and T761 are each glycosylated (O-linked (Man) threonine). N-linked (GlcNAc...) asparagine glycans are attached at residues N785, N879, and N930. A helical transmembrane segment spans residues 933-955; the sequence is GLIAGVVSISIALLLLLGLFLWL. The Cytoplasmic portion of the chain corresponds to 956–1381; that stretch reads KKRKQIKDLG…QDNADGELDT (426 aa). S966 carries the post-translational modification Phosphoserine. At T977 the chain carries Phosphothreonine. Phosphoserine occurs at positions 990, 997, and 1000. Y1003 bears the Phosphotyrosine mark. A Protein kinase domain is found at 1078–1345; the sequence is VHFNEVIGRG…RISAIFSTFI (268 aa). ATP-binding positions include 1084–1092 and K1110; that span reads IGRGHFGCV. The active-site Proton acceptor is D1204. The segment at 1212-1381 is interaction with RANBP9; it reads LDEKFTVKVA…QDNADGELDT (170 aa). Y1230 is subject to Phosphotyrosine. Phosphotyrosine; by autocatalysis is present on residues Y1234 and Y1235. The residue at position 1289 (T1289) is a Phosphothreonine. Residues 1320-1359 are interaction with MUC20; the sequence is WHPKAEMRPSFSELVSRISAIFSTFIGEHYVHVNATYVNV. 2 positions are modified to phosphotyrosine; by autocatalysis: Y1349 and Y1356. Y1365 is modified (phosphotyrosine).

It belongs to the protein kinase superfamily. Tyr protein kinase family. Heterodimer made of an alpha chain (50 kDa) and a beta chain (145 kDa) which are disulfide linked. Binds PLXNB1. Interacts when phosphorylated with downstream effectors including STAT3, PIK3R1, SRC, PCLG1, GRB2 and GAB1. Interacts with SPSB1, SPSB2 and SPSB4. Interacts with INPP5D/SHIP1. When phosphorylated at Tyr-1356, interacts with INPPL1/SHIP2. Interacts with RANBP9 and RANBP10, as well as SPSB1, SPSB2, SPSB3 and SPSB4. SPSB1 binding occurs in the presence and in the absence of HGF, however HGF treatment has a positive effect on this interaction. Interacts with MUC20; prevents interaction with GRB2 and suppresses hepatocyte growth factor-induced cell proliferation. Interacts with GRB10. Interacts with PTPN1 and PTPN2. Interacts with HSP90AA1 and HSP90AB1; the interaction suppresses MET kinase activity. Interacts with tensin TNS3. Interacts (when phosphorylated) with tensin TNS4 (via SH2 domain); the interaction increases MET protein stability by inhibiting MET endocytosis and subsequent lysosomal degradation. In terms of processing, autophosphorylated in response to ligand binding on Tyr-1234 and Tyr-1235 in the kinase domain leading to further phosphorylation of Tyr-1349 and Tyr-1356 in the C-terminal multifunctional docking site. Dephosphorylated by PTPRJ at Tyr-1349 and Tyr-1365. Dephosphorylated by PTPN1 and PTPN2. Post-translationally, ubiquitinated. Ubiquitination by CBL regulates the receptor stability and activity through proteasomal degradation. O-mannosylation of IPT/TIG domains by TMEM260 is required for protein maturation. O-mannosylated residues are composed of single mannose glycans that are not elongated or modified.

It localises to the membrane. It carries out the reaction L-tyrosyl-[protein] + ATP = O-phospho-L-tyrosyl-[protein] + ADP + H(+). With respect to regulation, in its inactive state, the C-terminal tail interacts with the catalytic domain and inhibits the kinase activity. Upon ligand binding, the C-terminal tail is displaced and becomes phosphorylated, thus increasing the kinase activity. Receptor tyrosine kinase that transduces signals from the extracellular matrix into the cytoplasm by binding to hepatocyte growth factor/HGF ligand. Regulates many physiological processes including proliferation, scattering, morphogenesis and survival. Ligand binding at the cell surface induces autophosphorylation of MET on its intracellular domain that provides docking sites for downstream signaling molecules. Following activation by ligand, interacts with the PI3-kinase subunit PIK3R1, PLCG1, SRC, GRB2, STAT3 or the adapter GAB1. Recruitment of these downstream effectors by MET leads to the activation of several signaling cascades including the RAS-ERK, PI3 kinase-AKT, or PLCgamma-PKC. The RAS-ERK activation is associated with the morphogenetic effects while PI3K/AKT coordinates prosurvival effects. During embryonic development, MET signaling plays a role in gastrulation, development and migration of muscles and neuronal precursors, angiogenesis and kidney formation. In adults, participates in wound healing as well as organ regeneration and tissue remodeling. Also promotes differentiation and proliferation of hematopoietic cells. The polypeptide is Hepatocyte growth factor receptor (MET) (Saimiri boliviensis boliviensis (Bolivian squirrel monkey)).